The following is a 200-amino-acid chain: Formate dehydrogenase iron-sulfur subunit (200 aa).

4Fe-4S ferredoxin-type domains follow at residues 7–37, 50–81, and 82–111; these read VKFY…VGVN, GKEK…VRAD, and GIVL…FPKS. Residues C16, C19, C22, C26, C59, C62, C67, C71, C91, C94, C97, C101, C123, C126, C155, and C159 each contribute to the [4Fe-4S] cluster site.

In terms of assembly, formate dehydrogenase is a membrane-bound complex, formed of at least three different subunits. [4Fe-4S] cluster is required as a cofactor.

Its function is as follows. This chain is an electron transfer unit containing 18 cysteine residues, 16 of which occur in four clusters. This is Formate dehydrogenase iron-sulfur subunit (fdhB1) from Wolinella succinogenes (strain ATCC 29543 / DSM 1740 / CCUG 13145 / JCM 31913 / LMG 7466 / NCTC 11488 / FDC 602W) (Vibrio succinogenes).